The chain runs to 238 residues: tRNA (guanine-N(7)-)-methyltransferase (238 aa).

The S-adenosyl-L-methionine site is built by Glu68, Glu93, Asp120, and Asp143. Asp143 is a catalytic residue. Residues Lys147, Asp179, and 216–219 contribute to the substrate site; that span reads TKFE.

It belongs to the class I-like SAM-binding methyltransferase superfamily. TrmB family.

It catalyses the reaction guanosine(46) in tRNA + S-adenosyl-L-methionine = N(7)-methylguanosine(46) in tRNA + S-adenosyl-L-homocysteine. The protein operates within tRNA modification; N(7)-methylguanine-tRNA biosynthesis. Its function is as follows. Catalyzes the formation of N(7)-methylguanine at position 46 (m7G46) in tRNA. This Shewanella baltica (strain OS195) protein is tRNA (guanine-N(7)-)-methyltransferase.